The chain runs to 691 residues: 1,4-alpha-glucan-branching enzyme (691 aa).

2 residues coordinate (1,4-alpha-D-glucosyl)n: Trp80 and Lys116. Asp333 (nucleophile) is an active-site residue. Catalysis depends on Glu398, which acts as the Proton donor.

This sequence belongs to the glycosyl hydrolase 13 family. GlgB subfamily.

It is found in the cytoplasm. The catalysed reaction is Transfers a segment of a (1-&gt;4)-alpha-D-glucan chain to a primary hydroxy group in a similar glucan chain.. Its pathway is glycan biosynthesis; glycogen biosynthesis. In terms of biological role, glycogen-branching enzyme participates in the glycogen biosynthetic process along with glycogenin and glycogen synthase. Generates alpha-1,6-glucosidic branches from alpha-1,4-linked glucose chains, to increase solubility of the glycogen polymer. This chain is 1,4-alpha-glucan-branching enzyme (GLC3), found in Yarrowia lipolytica (strain CLIB 122 / E 150) (Yeast).